Reading from the N-terminus, the 282-residue chain is MIKDYKVSIAIPIALLILSILLIGFKGIPKSIDITGGTEITIKVNENMDITPLKESLNGIAEVKKLESADGYYIVIRCKNEDVDIVKQKIKEFFHVDSLDKLNYSEKTIGATLSSKFFEEGFKAVGFAFMFMAIVVYLYFRNPVPSGAIILSALSDIIMALGAMSLLGIELSSATIAALLMVIGYSVDSDILLTTRVLKRLTKSFDETVKEAMKTGLTMTLTTITAMLILLIVVKLFIPVADILANIATVLILALIADIINTWLLNAGILKYYITEYRAKKI.

6 helical membrane passes run 9–29 (IAIP…KGIP), 120–140 (EGFK…YLYF), 149–169 (IILS…LLGI), 174–194 (ATIA…ILLT), 214–234 (KTGL…LIVV), and 236–256 (LFIP…LALI).

It belongs to the SecD/SecF family. SecF subfamily. In terms of assembly, part of the protein translocation apparatus. Forms a complex with SecD.

The protein resides in the cell membrane. Involved in protein export. The chain is Protein-export membrane protein SecF from Methanocaldococcus jannaschii (strain ATCC 43067 / DSM 2661 / JAL-1 / JCM 10045 / NBRC 100440) (Methanococcus jannaschii).